Consider the following 361-residue polypeptide: Chorismate synthase (361 aa).

The NADP(+) site is built by arginine 48 and arginine 54. Residues 125-127 (RSS), 238-239 (NA), glycine 278, 293-297 (KPTSS), and arginine 319 contribute to the FMN site.

This sequence belongs to the chorismate synthase family. Homotetramer. The cofactor is FMNH2.

The enzyme catalyses 5-O-(1-carboxyvinyl)-3-phosphoshikimate = chorismate + phosphate. It participates in metabolic intermediate biosynthesis; chorismate biosynthesis; chorismate from D-erythrose 4-phosphate and phosphoenolpyruvate: step 7/7. Its function is as follows. Catalyzes the anti-1,4-elimination of the C-3 phosphate and the C-6 proR hydrogen from 5-enolpyruvylshikimate-3-phosphate (EPSP) to yield chorismate, which is the branch point compound that serves as the starting substrate for the three terminal pathways of aromatic amino acid biosynthesis. This reaction introduces a second double bond into the aromatic ring system. In Pectobacterium atrosepticum (strain SCRI 1043 / ATCC BAA-672) (Erwinia carotovora subsp. atroseptica), this protein is Chorismate synthase.